Reading from the N-terminus, the 247-residue chain is 2,3-bisphosphoglycerate-dependent phosphoglycerate mutase (247 aa).

Residues 9 to 16 (RHGESEWN), 22 to 23 (TG), Arg61, 88 to 91 (ERHY), Lys99, 115 to 116 (RR), and 183 to 184 (GN) contribute to the substrate site. The Tele-phosphohistidine intermediate role is filled by His10. Residue Glu88 is the Proton donor/acceptor of the active site.

Belongs to the phosphoglycerate mutase family. BPG-dependent PGAM subfamily.

It carries out the reaction (2R)-2-phosphoglycerate = (2R)-3-phosphoglycerate. It functions in the pathway carbohydrate degradation; glycolysis; pyruvate from D-glyceraldehyde 3-phosphate: step 3/5. In terms of biological role, catalyzes the interconversion of 2-phosphoglycerate and 3-phosphoglycerate. This chain is 2,3-bisphosphoglycerate-dependent phosphoglycerate mutase, found in Nocardioides sp. (strain ATCC BAA-499 / JS614).